The primary structure comprises 101 residues: Protein Tat (101 aa).

Residues 1-12 (MEPVDPRLEPWK) show a composition bias toward basic and acidic residues. The tract at residues 1-24 (MEPVDPRLEPWKHPGSQPKTASNN) is disordered. The tract at residues 1–24 (MEPVDPRLEPWKHPGSQPKTASNN) is interaction with human CREBBP. The segment at 1 to 48 (MEPVDPRLEPWKHPGSQPKTASNNCYCKRCCLHCQVCFTKKGLGISYG) is transactivation. Residues 22 to 37 (SNNCYCKRCCLHCQVC) are cysteine-rich. Positions 25 and 27 each coordinate Zn(2+). Lysine 28 carries the post-translational modification N6-acetyllysine; by host PCAF. Cysteine 30, histidine 33, cysteine 34, and cysteine 37 together coordinate Zn(2+). The segment at 38-48 (FTKKGLGISYG) is core. The segment at 45-101 (ISYGRKKRRQRRRAPQDSKTHQVSLSKQPASQPRGDPTGPKESKKKVERETETDPED) is disordered. Positions 48 to 57 (GRKKRRQRRR) are enriched in basic residues. Residues 49–57 (RKKRRQRRR) carry the Nuclear localization signal, RNA-binding (TAR), and protein transduction motif. An interaction with the host capping enzyme RNGTT region spans residues 49–86 (RKKRRQRRRAPQDSKTHQVSLSKQPASQPRGDPTGPKE). Residues lysine 50 and lysine 51 each carry the N6-acetyllysine; by host EP300 and GCN5L2 modification. 2 positions are modified to asymmetric dimethylarginine; by host PRMT6: arginine 52 and arginine 53. Positions 65–75 (HQVSLSKQPAS) are enriched in polar residues. A Glycyl lysine isopeptide (Lys-Gly) (interchain with G-Cter in ubiquitin) cross-link involves residue lysine 71. Residues 78-80 (RGD) carry the Cell attachment site motif. Over residues 83 to 101 (GPKESKKKVERETETDPED) the composition is skewed to basic and acidic residues.

The protein belongs to the lentiviruses Tat family. Interacts with host CCNT1. Associates with the P-TEFb complex composed at least of Tat, P-TEFb (CDK9 and CCNT1), TAR RNA, RNA Pol II. Recruits the HATs CREBBP, TAF1/TFIID, EP300, PCAF and GCN5L2. Interacts with host KAT5/Tip60; this interaction targets the latter to degradation. Interacts with the host deacetylase SIRT1. Interacts with host capping enzyme RNGTT; this interaction stimulates RNGTT. Binds to host KDR, and to the host integrins ITGAV/ITGB3 and ITGA5/ITGB1. Interacts with host KPNB1/importin beta-1 without previous binding to KPNA1/importin alpha-1. Interacts with EIF2AK2. Interacts with host nucleosome assembly protein NAP1L1; this interaction may be required for the transport of Tat within the nucleus, since the two proteins interact at the nuclear rim. Interacts with host C1QBP/SF2P32; this interaction involves lysine-acetylated Tat. Interacts with the host chemokine receptors CCR2, CCR3 and CXCR4. Interacts with host DPP4/CD26; this interaction may trigger an anti-proliferative effect. Interacts with host LDLR. Interacts with the host extracellular matrix metalloproteinase MMP1. Interacts with host PRMT6; this interaction mediates Tat's methylation. Interacts with, and is ubiquitinated by MDM2/Hdm2. Interacts with host PSMC3 and HTATIP2. Interacts with STAB1; this interaction may overcome SATB1-mediated repression of IL2 and IL2RA (interleukin) in T cells by binding to the same domain than HDAC1. Interacts (when acetylated) with human CDK13, thereby increasing HIV-1 mRNA splicing and promoting the production of the doubly spliced HIV-1 protein Nef. Interacts with host TBP; this interaction modulates the activity of transcriptional pre-initiation complex. Interacts with host RELA. Interacts with host PLSCR1; this interaction negatively regulates Tat transactivation activity by altering its subcellular distribution. Asymmetrical arginine methylation by host PRMT6 seems to diminish the transactivation capacity of Tat and affects the interaction with host CCNT1. In terms of processing, acetylation by EP300, CREBBP, GCN5L2/GCN5 and PCAF regulates the transactivation activity of Tat. EP300-mediated acetylation of Lys-50 promotes dissociation of Tat from the TAR RNA through the competitive binding to PCAF's bromodomain. In addition, the non-acetylated Tat's N-terminus can also interact with PCAF. PCAF-mediated acetylation of Lys-28 enhances Tat's binding to CCNT1. Lys-50 is deacetylated by SIRT1. Post-translationally, polyubiquitination by host MDM2 does not target Tat to degradation, but activates its transactivation function and fosters interaction with CCNT1 and TAR RNA. Phosphorylated by EIF2AK2 on serine and threonine residues adjacent to the basic region important for TAR RNA binding and function. Phosphorylation of Tat by EIF2AK2 is dependent on the prior activation of EIF2AK2 by dsRNA.

The protein localises to the host nucleus. It localises to the host nucleolus. It is found in the host cytoplasm. The protein resides in the secreted. Functionally, transcriptional activator that increases RNA Pol II processivity, thereby increasing the level of full-length viral transcripts. Recognizes a hairpin structure at the 5'-LTR of the nascent viral mRNAs referred to as the transactivation responsive RNA element (TAR) and recruits the cyclin T1-CDK9 complex (P-TEFb complex) that will in turn hyperphosphorylate the RNA polymerase II to allow efficient elongation. The CDK9 component of P-TEFb and other Tat-activated kinases hyperphosphorylate the C-terminus of RNA Pol II that becomes stabilized and much more processive. Other factors such as HTATSF1/Tat-SF1, SUPT5H/SPT5, and HTATIP2 are also important for Tat's function. Besides its effect on RNA Pol II processivity, Tat induces chromatin remodeling of proviral genes by recruiting the histone acetyltransferases (HATs) CREBBP, EP300 and PCAF to the chromatin. This also contributes to the increase in proviral transcription rate, especially when the provirus integrates in transcriptionally silent region of the host genome. To ensure maximal activation of the LTR, Tat mediates nuclear translocation of NF-kappa-B by interacting with host RELA. Through its interaction with host TBP, Tat may also modulate transcription initiation. Tat can reactivate a latently infected cell by penetrating in it and transactivating its LTR promoter. In the cytoplasm, Tat is thought to act as a translational activator of HIV-1 mRNAs. In terms of biological role, extracellular circulating Tat can be endocytosed by surrounding uninfected cells via the binding to several surface receptors such as CD26, CXCR4, heparan sulfate proteoglycans (HSPG) or LDLR. Neurons are rarely infected, but they internalize Tat via their LDLR. Through its interaction with nuclear HATs, Tat is potentially able to control the acetylation-dependent cellular gene expression. Modulates the expression of many cellular genes involved in cell survival, proliferation or in coding for cytokines or cytokine receptors. Tat plays a role in T-cell and neurons apoptosis. Tat induced neurotoxicity and apoptosis probably contribute to neuroAIDS. Circulating Tat also acts as a chemokine-like and/or growth factor-like molecule that binds to specific receptors on the surface of the cells, affecting many cellular pathways. In the vascular system, Tat binds to ITGAV/ITGB3 and ITGA5/ITGB1 integrins dimers at the surface of endothelial cells and competes with bFGF for heparin-binding sites, leading to an excess of soluble bFGF. The chain is Protein Tat from Homo sapiens (Human).